The primary structure comprises 597 residues: uncharacterized protein (597 aa).

Residues 1 to 23 are compositionally biased toward basic and acidic residues; sequence MSHEGSRQARDRGVTRSKAEKAR. Disordered stretches follow at residues 1-32 and 171-192; these read MSHE…VPQV and RESQ…NPRP. Over residues 175–186 the composition is skewed to low complexity; the sequence is EPTQSSEPSAEP. A phosphoserine mark is found at Ser237 and Ser241. Disordered stretches follow at residues 302-335 and 549-569; these read SLLS…MRLD and EAEE…GVSK. A compositionally biased stretch (polar residues) spans 557 to 568; the sequence is APEQQPIQTGVS.

This is an uncharacterized protein from Rattus norvegicus (Rat).